The following is a 115-amino-acid chain: Large ribosomal subunit protein uL22c (115 aa).

This sequence belongs to the universal ribosomal protein uL22 family. Part of the 50S ribosomal subunit.

It is found in the plastid. Its subcellular location is the chloroplast. In terms of biological role, this protein binds specifically to 23S rRNA. Functionally, the globular domain of the protein is located near the polypeptide exit tunnel on the outside of the subunit, while an extended beta-hairpin is found that lines the wall of the exit tunnel in the center of the 70S ribosome. The protein is Large ribosomal subunit protein uL22c (rpl22) of Thalassiosira pseudonana (Marine diatom).